The chain runs to 312 residues: Malate dehydrogenase (312 aa).

Residues 7–13 and Asp34 contribute to the NAD(+) site; that span reads GAAGGIG. Residues Arg81 and Arg87 each coordinate substrate. NAD(+)-binding positions include Asn94 and 117 to 119; that span reads ITN. Residues Asn119 and Arg153 each contribute to the substrate site. The active-site Proton acceptor is His177. Residue Met227 coordinates NAD(+).

It belongs to the LDH/MDH superfamily. MDH type 1 family. As to quaternary structure, homodimer.

The catalysed reaction is (S)-malate + NAD(+) = oxaloacetate + NADH + H(+). Catalyzes the reversible oxidation of malate to oxaloacetate. The protein is Malate dehydrogenase of Escherichia coli O139:H28 (strain E24377A / ETEC).